The sequence spans 439 residues: SH3 domain-containing protein 1 (439 aa).

The BAR domain maps to 32 to 263 (DAVVVDEEEL…MIAEEEAIGS (232 aa)). The segment covering 277–291 (SLPQQEPNSNSSGEI) has biased composition (polar residues). A disordered region spans residues 277–362 (SLPQQEPNSN…SDDHHNHQLL (86 aa)). A compositionally biased stretch (basic and acidic residues) spans 318-358 (SPKDEMKSSPQEETKSNHQKEIKSSPQEEIKKSNGSDDHHN). The SH3 domain maps to 366–425 (DSYFLAKVVHPFDAQAPGELSLAVDDYVIVRQVAGTGWSEGEYKGKAGWFPSAYVEKQEK).

In terms of assembly, interacts with the auxilin-like protein AUXI1. As to expression, highly expressed in flowers. Detected in seedlings, roots, leaves and stems.

The protein localises to the cytoplasmic vesicle. Its subcellular location is the clathrin-coated vesicle. The protein resides in the cell membrane. It is found in the golgi apparatus. It localises to the trans-Golgi network. The protein localises to the endoplasmic reticulum. In terms of biological role, lipid binding protein bound strongly to phosphatidic acid, phosphatidylinositol-4-phosphate and phosphatidylinositol-4,5-bisphosphate. Binds actin in vitro. Involved in trafficking and modification of clathrin-coated vesicles. This chain is SH3 domain-containing protein 1 (SH3P1), found in Arabidopsis thaliana (Mouse-ear cress).